Here is a 291-residue protein sequence, read N- to C-terminus: Bifunctional protein FolD (291 aa).

Residues 166–168 (GAG), isoleucine 191, and isoleucine 232 contribute to the NADP(+) site.

It belongs to the tetrahydrofolate dehydrogenase/cyclohydrolase family. As to quaternary structure, homodimer.

The catalysed reaction is (6R)-5,10-methylene-5,6,7,8-tetrahydrofolate + NADP(+) = (6R)-5,10-methenyltetrahydrofolate + NADPH. It carries out the reaction (6R)-5,10-methenyltetrahydrofolate + H2O = (6R)-10-formyltetrahydrofolate + H(+). Its pathway is one-carbon metabolism; tetrahydrofolate interconversion. Its function is as follows. Catalyzes the oxidation of 5,10-methylenetetrahydrofolate to 5,10-methenyltetrahydrofolate and then the hydrolysis of 5,10-methenyltetrahydrofolate to 10-formyltetrahydrofolate. This chain is Bifunctional protein FolD, found in Aquifex aeolicus (strain VF5).